Here is a 503-residue protein sequence, read N- to C-terminus: Cytochrome P450 3A13 (503 aa).

C442 lines the heme pocket.

It belongs to the cytochrome P450 family. Heme is required as a cofactor.

It is found in the endoplasmic reticulum membrane. The protein localises to the microsome membrane. It catalyses the reaction an organic molecule + reduced [NADPH--hemoprotein reductase] + O2 = an alcohol + oxidized [NADPH--hemoprotein reductase] + H2O + H(+). Functionally, can activate aflatoxin B1 to a genotoxic product. The sequence is that of Cytochrome P450 3A13 (Cyp3a13) from Mus musculus (Mouse).